We begin with the raw amino-acid sequence, 252 residues long: 3-dehydroquinate dehydratase (252 aa).

3-dehydroquinate is bound by residues serine 21, 46–48 (EWR), and arginine 82. Histidine 143 (proton donor/acceptor) is an active-site residue. Catalysis depends on lysine 170, which acts as the Schiff-base intermediate with substrate. 3-dehydroquinate contacts are provided by arginine 213, serine 232, and glutamine 236.

This sequence belongs to the type-I 3-dehydroquinase family. Dimer of dimers.

It carries out the reaction 3-dehydroquinate = 3-dehydroshikimate + H2O. The protein operates within metabolic intermediate biosynthesis; chorismate biosynthesis; chorismate from D-erythrose 4-phosphate and phosphoenolpyruvate: step 3/7. Its activity is regulated as follows. Inhibited by (2R)-2-methyl-3-dehydroquinic acid. Its function is as follows. Involved in the third step of the chorismate pathway, which leads to the biosynthesis of aromatic amino acids. Catalyzes the cis-dehydration of 3-dehydroquinate (DHQ) and introduces the first double bond of the aromatic ring to yield 3-dehydroshikimate. The reaction involves the formation of an imine intermediate between the keto group of 3-dehydroquinate and the epsilon-amino group of Lys-170 at the active site. In Salmonella typhi, this protein is 3-dehydroquinate dehydratase.